A 259-amino-acid chain; its full sequence is Global transcriptional regulator CodY (259 aa).

The tract at residues 1–155 (MELLAKTRKL…SATVVGMEIL (155 aa)) is GAF domain. Residues 203–222 (ASKIADRVGITRSVIVNALR) constitute a DNA-binding region (H-T-H motif). Position 215 is a phosphoserine (Ser-215).

It belongs to the CodY family.

It localises to the cytoplasm. In terms of biological role, DNA-binding global transcriptional regulator which is involved in the adaptive response to starvation and acts by directly or indirectly controlling the expression of numerous genes in response to nutrient availability. During rapid exponential growth, CodY is highly active and represses genes whose products allow adaptation to nutrient depletion. In Bacillus cytotoxicus (strain DSM 22905 / CIP 110041 / 391-98 / NVH 391-98), this protein is Global transcriptional regulator CodY.